Here is a 327-residue protein sequence, read N- to C-terminus: GTP 3',8-cyclase (327 aa).

A Radical SAM core domain is found at 21 to 233; it reads SYGRRIRKLR…AKIQQKYSLK (213 aa). Residue R30 coordinates GTP. [4Fe-4S] cluster contacts are provided by C37 and C41. An S-adenosyl-L-methionine-binding site is contributed by Y43. Position 44 (C44) interacts with [4Fe-4S] cluster. R79 serves as a coordination point for GTP. Residue G83 participates in S-adenosyl-L-methionine binding. T109 contacts GTP. Residue S133 coordinates S-adenosyl-L-methionine. K169 contacts GTP. M203 contributes to the S-adenosyl-L-methionine binding site. The [4Fe-4S] cluster site is built by C265 and C268. 270–272 serves as a coordination point for GTP; sequence RWR. A [4Fe-4S] cluster-binding site is contributed by C282.

This sequence belongs to the radical SAM superfamily. MoaA family. Monomer and homodimer. The cofactor is [4Fe-4S] cluster.

The enzyme catalyses GTP + AH2 + S-adenosyl-L-methionine = (8S)-3',8-cyclo-7,8-dihydroguanosine 5'-triphosphate + 5'-deoxyadenosine + L-methionine + A + H(+). It participates in cofactor biosynthesis; molybdopterin biosynthesis. In terms of biological role, catalyzes the cyclization of GTP to (8S)-3',8-cyclo-7,8-dihydroguanosine 5'-triphosphate. This Synechocystis sp. (strain ATCC 27184 / PCC 6803 / Kazusa) protein is GTP 3',8-cyclase.